A 331-amino-acid chain; its full sequence is Threonine-phosphate decarboxylase (331 aa).

K192 bears the N6-(pyridoxal phosphate)lysine mark.

It belongs to the class-I pyridoxal-phosphate-dependent aminotransferase family. Homodimer. It depends on pyridoxal 5'-phosphate as a cofactor.

The protein resides in the cytoplasm. It catalyses the reaction O-phospho-L-threonine + H(+) = (R)-1-aminopropan-2-yl phosphate + CO2. It participates in cofactor biosynthesis; adenosylcobalamin biosynthesis. Functionally, decarboxylates L-threonine-O-3-phosphate to yield (R)-1-amino-2-propanol O-2-phosphate, the precursor for the linkage between the nucleotide loop and the corrin ring in cobalamin. This chain is Threonine-phosphate decarboxylase (cobC), found in Pseudomonas aeruginosa (strain ATCC 15692 / DSM 22644 / CIP 104116 / JCM 14847 / LMG 12228 / 1C / PRS 101 / PAO1).